Reading from the N-terminus, the 94-residue chain is Probable FAD-linked sulfhydryl oxidase FPV093 (94 aa).

Positions 1-94 (MDPRYWGSSF…IDIKKVKKLI (94 aa)) constitute an ERV/ALR sulfhydryl oxidase domain. Residues Cys41 and Cys44 are joined by a disulfide bond.

The protein belongs to the poxviruses E10 family. It depends on FAD as a cofactor.

The catalysed reaction is 2 R'C(R)SH + O2 = R'C(R)S-S(R)CR' + H2O2. FAD-dependent sulfhydryl oxidase that catalyzes disulfide bond formation. This chain is Probable FAD-linked sulfhydryl oxidase FPV093, found in Fowlpox virus (strain NVSL) (FPV).